We begin with the raw amino-acid sequence, 210 residues long: S-norcoclaurine synthase (210 aa).

The signal sequence occupies residues 1–19 (MMKMEVVFVFLMLLGTINC). 108 to 110 (YKE) contributes to the dopamine binding site. K122 serves as the catalytic Proton donor. Position 141 (D141) interacts with (4-hydroxyphenyl)acetaldehyde.

It belongs to the BetVI family. Concentration-dependent dimerization, but mainly monomeric at concentrations around 10 uM. In terms of tissue distribution, expressed most abundantly in the rhizomes and to a lesser extent in petioles, roots, leaves and flower buds.

It catalyses the reaction (4-hydroxyphenyl)acetaldehyde + dopamine = (S)-norcoclaurine + H2O. In terms of biological role, involved in the biosynthesis of the common precursor of all benzylisoquinoline alkaloids such as morphine, sanguinarine, codeine or berberine. Condenses dopamine and 4-hydroxyphenylacetaldehyde. The polypeptide is S-norcoclaurine synthase (Thalictrum flavum subsp. glaucum (Yellow meadow rue)).